A 435-amino-acid polypeptide reads, in one-letter code: AP-2 complex subunit mu (435 aa).

A Phosphoserine modification is found at Ser-45. At Thr-156 the chain carries Phosphothreonine. An MHD domain is found at 170–434 (RNELFLDVLE…IGRSGIYETR (265 aa)). A 1,2-diacyl-sn-glycero-3-phospho-(1D-myo-inositol-3,4,5-trisphosphate) is bound by residues Lys-341, Lys-345, and Lys-354.

This sequence belongs to the adaptor complexes medium subunit family. As to quaternary structure, adaptor protein complex 2 (AP-2) is a heterotetramer composed of two large adaptins (alpha-type subunit AP2A1 or AP2A2 and beta-type subunit AP2B1), a medium adaptin (mu-type subunit AP2M1) and a small adaptin (sigma-type subunit AP2S1). Interacts with ATP6V1H and MEGF10. Interacts with EGFR and TTGN1. Interacts with F2R. Interacts with PIP5K1C; tyrosine phosphorylation of PIP5K1C weakens the interaction. Interacts with KIAA0319; required for clathrin-mediated endocytosis of KIAA0319. Interacts with DVL2 (via DEP domain). Interacts with KCNQ1; mediates estrogen-induced internalization via clathrin-coated vesicles. Interacts with P2RX4 (via internalization motif). Together with AP2A1 or AP2A2 and AP2B1, it interacts with ADAM10; this interaction facilitates ADAM10 endocytosis from the plasma membrane during long-term potentiation in hippocampal neurons. Probably interacts with ACE2 (via endocytic sorting signal motif); the interaction is inhibited by ACE2 phosphorylation. Interacts with RALBP1; the interaction is direct. Interacts with TMEM106B (via N-terminus). Post-translationally, phosphorylation at Thr-156 increases the affinity of the AP-2 complex for cargo membrane proteins during the initial stages of endocytosis.

It is found in the cell membrane. The protein resides in the membrane. Its subcellular location is the coated pit. In terms of biological role, component of the adaptor protein complex 2 (AP-2). Adaptor protein complexes function in protein transport via transport vesicles in different membrane traffic pathways. Adaptor protein complexes are vesicle coat components and appear to be involved in cargo selection and vesicle formation. AP-2 is involved in clathrin-dependent endocytosis in which cargo proteins are incorporated into vesicles surrounded by clathrin (clathrin-coated vesicles, CCVs) which are destined for fusion with the early endosome. The clathrin lattice serves as a mechanical scaffold but is itself unable to bind directly to membrane components. Clathrin-associated adaptor protein (AP) complexes which can bind directly to both the clathrin lattice and to the lipid and protein components of membranes are considered to be the major clathrin adaptors contributing the CCV formation. AP-2 also serves as a cargo receptor to selectively sort the membrane proteins involved in receptor-mediated endocytosis. AP-2 seems to play a role in the recycling of synaptic vesicle membranes from the presynaptic surface. AP-2 recognizes Y-X-X-[FILMV] (Y-X-X-Phi) and [ED]-X-X-X-L-[LI] endocytosis signal motifs within the cytosolic tails of transmembrane cargo molecules. AP-2 may also play a role in maintaining normal post-endocytic trafficking through the ARF6-regulated, non-clathrin pathway. During long-term potentiation in hippocampal neurons, AP-2 is responsible for the endocytosis of ADAM10. The AP-2 mu subunit binds to transmembrane cargo proteins; it recognizes the Y-X-X-Phi motifs. The surface region interacting with to the Y-X-X-Phi motif is inaccessible in cytosolic AP-2, but becomes accessible through a conformational change following phosphorylation of AP-2 mu subunit at Thr-156 in membrane-associated AP-2. The membrane-specific phosphorylation event appears to involve assembled clathrin which activates the AP-2 mu kinase AAK1. Plays a role in endocytosis of frizzled family members upon Wnt signaling. The chain is AP-2 complex subunit mu (AP2M1) from Bos taurus (Bovine).